The following is a 596-amino-acid chain: Proton channel OTOP3 (596 aa).

Residues methionine 1–serine 21 are compositionally biased toward low complexity. Positions methionine 1–alanine 59 are disordered. Over methionine 1–glutamine 88 the chain is Cytoplasmic. Serine 21 and serine 23 each carry phosphoserine. Positions alanine 43 to alanine 59 are enriched in basic and acidic residues. Residues leucine 89–methionine 109 form a helical membrane-spanning segment. Residues isoleucine 110–glycine 119 are Extracellular-facing. A helical transmembrane segment spans residues aspartate 120 to threonine 143. At threonine 144–proline 159 the chain is on the cytoplasmic side. Residues leucine 160–valine 181 form a helical membrane-spanning segment. Residues glycine 182 to glutamine 193 lie on the Extracellular side of the membrane. Residues leucine 194–cysteine 217 form a helical membrane-spanning segment. Over lysine 218 to threonine 225 the chain is Cytoplasmic. A helical transmembrane segment spans residues asparagine 226–threonine 248. The Extracellular portion of the chain corresponds to asparagine 249 to proline 295. The helical transmembrane segment at phenylalanine 296–tryptophan 312 threads the bilayer. The Cytoplasmic segment spans residues lysine 313–isoleucine 338. A helical transmembrane segment spans residues phenylalanine 339–phenylalanine 358. Over glutamine 359 to phenylalanine 372 the chain is Extracellular. The chain crosses the membrane as a helical span at residues threonine 373–alanine 395. Residues isoleucine 396 to serine 413 lie on the Cytoplasmic side of the membrane. Residues leucine 414–valine 435 form a helical membrane-spanning segment. Topologically, residues alanine 436 to leucine 446 are extracellular. Residues asparagine 447–isoleucine 469 form a helical membrane-spanning segment. Over glutamate 470–glutamate 529 the chain is Cytoplasmic. A helical transmembrane segment spans residues isoleucine 530 to phenylalanine 547. The Extracellular portion of the chain corresponds to glycine 548–isoleucine 566. Residues tryptophan 567–leucine 589 form a helical membrane-spanning segment. At valine 590–alanine 596 the chain is on the cytoplasmic side.

It belongs to the otopetrin family. In terms of assembly, homodimer.

The protein localises to the cell membrane. The catalysed reaction is H(+)(in) = H(+)(out). With respect to regulation, activated by extracellular acidification. Activated by Zn(2+) under non-acidic conditions. Proton-selective channel gated by extracellular protons. The sequence is that of Proton channel OTOP3 from Homo sapiens (Human).